The sequence spans 309 residues: Coproporphyrin III ferrochelatase (309 aa).

Residues Tyr12, Arg29, 45–46 (RY), Ser53, and Tyr124 each bind Fe-coproporphyrin III. 2 residues coordinate Fe(2+): His182 and Glu263.

Belongs to the ferrochelatase family.

The protein localises to the cytoplasm. It carries out the reaction Fe-coproporphyrin III + 2 H(+) = coproporphyrin III + Fe(2+). It functions in the pathway porphyrin-containing compound metabolism; protoheme biosynthesis. Its function is as follows. Involved in coproporphyrin-dependent heme b biosynthesis. Catalyzes the insertion of ferrous iron into coproporphyrin III to form Fe-coproporphyrin III. In Listeria monocytogenes serotype 4b (strain F2365), this protein is Coproporphyrin III ferrochelatase.